Consider the following 353-residue polypeptide: GDSL esterase/lipase APG (353 aa).

The signal sequence occupies residues M1–A25. S37 acts as the Nucleophile in catalysis. N-linked (GlcNAc...) asparagine glycosylation is found at N197 and N320. Active-site residues include D328 and H331.

This sequence belongs to the 'GDSL' lipolytic enzyme family.

It is found in the secreted. This Arabidopsis thaliana (Mouse-ear cress) protein is GDSL esterase/lipase APG (APG).